Here is a 524-residue protein sequence, read N- to C-terminus: Bifunctional purine biosynthesis protein PurH (524 aa).

Positions 1 to 144 constitute an MGS-like domain; it reads MTRRALVSVS…KNSAHVGVVV (144 aa).

Belongs to the PurH family.

The catalysed reaction is (6R)-10-formyltetrahydrofolate + 5-amino-1-(5-phospho-beta-D-ribosyl)imidazole-4-carboxamide = 5-formamido-1-(5-phospho-D-ribosyl)imidazole-4-carboxamide + (6S)-5,6,7,8-tetrahydrofolate. The enzyme catalyses IMP + H2O = 5-formamido-1-(5-phospho-D-ribosyl)imidazole-4-carboxamide. It functions in the pathway purine metabolism; IMP biosynthesis via de novo pathway; 5-formamido-1-(5-phospho-D-ribosyl)imidazole-4-carboxamide from 5-amino-1-(5-phospho-D-ribosyl)imidazole-4-carboxamide (10-formyl THF route): step 1/1. The protein operates within purine metabolism; IMP biosynthesis via de novo pathway; IMP from 5-formamido-1-(5-phospho-D-ribosyl)imidazole-4-carboxamide: step 1/1. The protein is Bifunctional purine biosynthesis protein PurH of Anaeromyxobacter dehalogenans (strain 2CP-C).